Reading from the N-terminus, the 363-residue chain is Pyrimidine monooxygenase RutA (363 aa).

Residues isoleucine 49 to lysine 50, asparagine 115, glutamate 124, arginine 140 to tyrosine 141, and serine 190 contribute to the FMN site.

The protein belongs to the NtaA/SnaA/DszA monooxygenase family. RutA subfamily.

It carries out the reaction uracil + FMNH2 + NADH + O2 = (Z)-3-ureidoacrylate + FMN + NAD(+) + H2O + H(+). It catalyses the reaction thymine + FMNH2 + NADH + O2 = (Z)-2-methylureidoacrylate + FMN + NAD(+) + H2O + H(+). Catalyzes the pyrimidine ring opening between N-3 and C-4 by an unusual flavin hydroperoxide-catalyzed mechanism, adding oxygen atoms in the process to yield ureidoacrylate peracid, that immediately reacts with FMN forming ureidoacrylate and FMN-N(5)-oxide. The FMN-N(5)-oxide reacts spontaneously with NADH to produce FMN. Requires the flavin reductase RutF to regenerate FMN in vivo. This chain is Pyrimidine monooxygenase RutA, found in Escherichia coli O103:H2 (strain 12009 / EHEC).